We begin with the raw amino-acid sequence, 261 residues long: Putative hydro-lyase VSAL_I1435 (261 aa).

This sequence belongs to the D-glutamate cyclase family.

The polypeptide is Putative hydro-lyase VSAL_I1435 (Aliivibrio salmonicida (strain LFI1238) (Vibrio salmonicida (strain LFI1238))).